The primary structure comprises 151 residues: 6,7-dimethyl-8-ribityllumazine synthase (151 aa).

Residues phenylalanine 23, 55 to 57 (AYE), and 79 to 81 (AVI) contribute to the 5-amino-6-(D-ribitylamino)uracil site. 84 to 85 (AT) is a (2S)-2-hydroxy-3-oxobutyl phosphate binding site. Histidine 87 acts as the Proton donor in catalysis. Phenylalanine 111 is a binding site for 5-amino-6-(D-ribitylamino)uracil. Arginine 125 contacts (2S)-2-hydroxy-3-oxobutyl phosphate.

This sequence belongs to the DMRL synthase family.

The catalysed reaction is (2S)-2-hydroxy-3-oxobutyl phosphate + 5-amino-6-(D-ribitylamino)uracil = 6,7-dimethyl-8-(1-D-ribityl)lumazine + phosphate + 2 H2O + H(+). It participates in cofactor biosynthesis; riboflavin biosynthesis; riboflavin from 2-hydroxy-3-oxobutyl phosphate and 5-amino-6-(D-ribitylamino)uracil: step 1/2. Catalyzes the formation of 6,7-dimethyl-8-ribityllumazine by condensation of 5-amino-6-(D-ribitylamino)uracil with 3,4-dihydroxy-2-butanone 4-phosphate. This is the penultimate step in the biosynthesis of riboflavin. This is 6,7-dimethyl-8-ribityllumazine synthase from Leptospira interrogans serogroup Icterohaemorrhagiae serovar Lai (strain 56601).